The sequence spans 331 residues: Ketol-acid reductoisomerase (NADP(+)) (331 aa).

The KARI N-terminal Rossmann domain maps to 2-182 (ARMYYDADAQ…GGTRAGILET (181 aa)). Residues 25–28 (YGSQ), Ser51, Ser53, and 83–86 (DEVQ) each bind NADP(+). The active site involves His108. Position 134 (Gly134) interacts with NADP(+). One can recognise a KARI C-terminal knotted domain in the interval 183 to 328 (TFREETETDL…QELRSMFSWL (146 aa)). Residues Asp191, Glu195, Glu227, and Glu231 each contribute to the Mg(2+) site. Ser252 lines the substrate pocket.

Belongs to the ketol-acid reductoisomerase family. The cofactor is Mg(2+).

The catalysed reaction is (2R)-2,3-dihydroxy-3-methylbutanoate + NADP(+) = (2S)-2-acetolactate + NADPH + H(+). The enzyme catalyses (2R,3R)-2,3-dihydroxy-3-methylpentanoate + NADP(+) = (S)-2-ethyl-2-hydroxy-3-oxobutanoate + NADPH + H(+). The protein operates within amino-acid biosynthesis; L-isoleucine biosynthesis; L-isoleucine from 2-oxobutanoate: step 2/4. It functions in the pathway amino-acid biosynthesis; L-valine biosynthesis; L-valine from pyruvate: step 2/4. Involved in the biosynthesis of branched-chain amino acids (BCAA). Catalyzes an alkyl-migration followed by a ketol-acid reduction of (S)-2-acetolactate (S2AL) to yield (R)-2,3-dihydroxy-isovalerate. In the isomerase reaction, S2AL is rearranged via a Mg-dependent methyl migration to produce 3-hydroxy-3-methyl-2-ketobutyrate (HMKB). In the reductase reaction, this 2-ketoacid undergoes a metal-dependent reduction by NADPH to yield (R)-2,3-dihydroxy-isovalerate. The polypeptide is Ketol-acid reductoisomerase (NADP(+)) (Thermosynechococcus vestitus (strain NIES-2133 / IAM M-273 / BP-1)).